The chain runs to 485 residues: Probable glycine dehydrogenase (decarboxylating) subunit 2 (485 aa).

K273 bears the N6-(pyridoxal phosphate)lysine mark.

Belongs to the GcvP family. C-terminal subunit subfamily. In terms of assembly, the glycine cleavage system is composed of four proteins: P, T, L and H. In this organism, the P 'protein' is a heterodimer of two subunits. Pyridoxal 5'-phosphate serves as cofactor.

The enzyme catalyses N(6)-[(R)-lipoyl]-L-lysyl-[glycine-cleavage complex H protein] + glycine + H(+) = N(6)-[(R)-S(8)-aminomethyldihydrolipoyl]-L-lysyl-[glycine-cleavage complex H protein] + CO2. The glycine cleavage system catalyzes the degradation of glycine. The P protein binds the alpha-amino group of glycine through its pyridoxal phosphate cofactor; CO(2) is released and the remaining methylamine moiety is then transferred to the lipoamide cofactor of the H protein. This chain is Probable glycine dehydrogenase (decarboxylating) subunit 2, found in Caldanaerobacter subterraneus subsp. tengcongensis (strain DSM 15242 / JCM 11007 / NBRC 100824 / MB4) (Thermoanaerobacter tengcongensis).